A 305-amino-acid polypeptide reads, in one-letter code: Ribonuclease BN (305 aa).

Zn(2+) is bound by residues histidine 64, histidine 66, aspartate 68, histidine 69, histidine 141, aspartate 212, and histidine 270. Aspartate 68 acts as the Proton acceptor in catalysis.

Belongs to the RNase Z family. RNase BN subfamily. In terms of assembly, homodimer. Zn(2+) serves as cofactor.

Zinc phosphodiesterase, which has both exoribonuclease and endoribonuclease activities. The protein is Ribonuclease BN of Escherichia coli O17:K52:H18 (strain UMN026 / ExPEC).